Here is a 1530-residue protein sequence, read N- to C-terminus: Glutamate-rich protein 3 (1530 aa).

Disordered stretches follow at residues 165 to 187, 408 to 429, 475 to 661, 673 to 724, 773 to 870, 923 to 1146, 1167 to 1334, 1360 to 1383, and 1425 to 1530; these read RLQP…RSRS, SLPK…KAEG, MTSK…PMPI, TEKG…GLEE, EAME…AVGL, REAA…LLGE, LENI…GMGG, LAGS…DVAE, and YTTE…NVQV. 3 stretches are compositionally biased toward basic and acidic residues: residues 415–429, 531–545, and 552–562; these read EKST…KAEG, LDDK…KESE, and PDARDNVKDEN. The segment covering 563–574 has biased composition (acidic residues); the sequence is DGCSESELEEDK. A compositionally biased stretch (low complexity) spans 581–592; it reads SSTSSRSHPYSS. Over residues 600–616 the composition is skewed to basic and acidic residues; the sequence is VGDREAHTDSSTDESAR. The segment covering 638 to 647 has biased composition (acidic residues); sequence ESLEIEIEDQ. Composition is skewed to basic and acidic residues over residues 684-717 and 773-787; these read LSEK…DKKA and EAME…RDAD. Positions 834–845 are enriched in low complexity; that stretch reads GIERGAEGAAEA. Over residues 943 to 958 the composition is skewed to acidic residues; the sequence is GESEEEASIDLEDTGP. Basic and acidic residues-rich tracts occupy residues 979-992, 1039-1116, and 1173-1212; these read EPAK…RTET, EANR…EETK, and LRKE…RQDG. Residues 1213–1225 show a composition bias toward low complexity; the sequence is EGALAAPEAEPAG. Positions 1289–1300 are enriched in acidic residues; it reads AVDEDPEEEEDK. Basic and acidic residues-rich tracts occupy residues 1464 to 1487 and 1502 to 1511; these read GRQE…RELS and DFTETREKQQ. The segment covering 1517-1530 has biased composition (polar residues); sequence ESETADVSPNNVQV.

In terms of assembly, interacts with CLTC/clathrin heavy chain 1, AP2A2/AP-2 complex subunit alpha-2, and PIK3C2A/phosphatidylinositol 4-phosphate 3-kinase C2 domain-containing subunit alpha. In terms of tissue distribution, expressed in dopaminergic and serotoninergic neurons.

It is found in the cell projection. The protein resides in the cilium. It localises to the cytoplasm. Its function is as follows. Component of the primary cilium that controls cilium formation and length. May function within retrograde intraflagellar transport (IFT)-associated pathways to remove signaling proteins from primary cilia. Also involved in neuronal vesicle biogenesis and neurotransmitter vesicular function. This chain is Glutamate-rich protein 3, found in Homo sapiens (Human).